A 643-amino-acid polypeptide reads, in one-letter code: MYSAGPPAVPAPRRCRRPPPGRPMQPPRPPAPAPVPAARPPPPAPGPRPRVAVKMAFRKAYSIKDKLQAIERVKGGERQASVCRDFGVPGGTLRGWLKDEPKLRWFLEQLGGEVGTQRKKMRLANEEEIDRAVYSWFLALRQHGVPLSGPLIQAQAEAFARQIYGPECTFKASHGWFWRWQKRHGISSQRIYGEAEPVAAGPAPGPPVKQEPAQPTRAGPLPDRAASTPAPAEGGYGDEQIYNANVTGLYWKLLPEQAAPVGAGGCGRRWRGDRVTVLLAANLTGSHKLKPLVIGQLPDPPSLRHHNQDKFPASYRYSPDAWLSRPLLRGWFFEEFVPGVRRYLRRSCLQQKAVLLVAHPPCPSSEARMPALEESEETRRRCRPEPTGPPEELQTPDGAVRVLFLCRGSGRAHIPAPLEQGVVAAFKQLYKRELLRLAVSCAGGSPLDFMRSFMLKDMLYLAGLSWDLVQAGSIERCWLLGLRAAFEPRPVEERAGQPAGQAEEAAEHSRVLSDLTHLAALAYKRLAPEEVAEWLHLDDDGGLPDGGREDWGPSRPPVLVPGGPLLPASLPSAVAGGAEEEEEEAIPTAGEAVRGLETALRWLETQDPREVGPLKLVQLRSLISTARRLGGIGPSPMVPDDGL.

The segment at methionine 1 to arginine 50 is disordered. Positions proline 20–arginine 48 are enriched in pro residues. Residues alanine 52–leucine 103 form the HTH psq-type domain. 2 DNA-binding regions (H-T-H motif) span residues glutamine 79–aspartate 99 and proline 150–arginine 183. Residues glutamine 117–arginine 190 form the HTH CENPB-type domain. Residues proline 197–tyrosine 236 form a disordered region. The region spanning aspartate 238–alanine 358 is the DDE-1 domain. A disordered region spans residues glutamate 366–threonine 395.

The protein belongs to the tigger transposable element derived protein family.

The protein resides in the nucleus. The protein is Tigger transposable element-derived protein 5 (TIGD5) of Bos taurus (Bovine).